Reading from the N-terminus, the 337-residue chain is tRNA N6-adenosine threonylcarbamoyltransferase (337 aa).

Residues H111 and H115 each contribute to the Fe cation site. Substrate-binding positions include 134-138, D167, G180, and N272; that span reads LVSGG. D300 is a Fe cation binding site.

Belongs to the KAE1 / TsaD family. The cofactor is Fe(2+).

It is found in the cytoplasm. It catalyses the reaction L-threonylcarbamoyladenylate + adenosine(37) in tRNA = N(6)-L-threonylcarbamoyladenosine(37) in tRNA + AMP + H(+). In terms of biological role, required for the formation of a threonylcarbamoyl group on adenosine at position 37 (t(6)A37) in tRNAs that read codons beginning with adenine. Is involved in the transfer of the threonylcarbamoyl moiety of threonylcarbamoyl-AMP (TC-AMP) to the N6 group of A37, together with TsaE and TsaB. TsaD likely plays a direct catalytic role in this reaction. The protein is tRNA N6-adenosine threonylcarbamoyltransferase of Klebsiella pneumoniae (strain 342).